We begin with the raw amino-acid sequence, 168 residues long: Cell division inhibitor SulA (168 aa).

The ftsZ binding stretch occupies residues 106–112 (ALLTGNY). Residues 161–168 (KIHSSLYH) form a lon protease binding region.

It belongs to the SulA family. Interacts with FtsZ. In terms of processing, is rapidly cleaved and degraded by the Lon protease once DNA damage is repaired.

In terms of biological role, component of the SOS system and an inhibitor of cell division. Accumulation of SulA causes rapid cessation of cell division and the appearance of long, non-septate filaments. In the presence of GTP, binds a polymerization-competent form of FtsZ in a 1:1 ratio, thus inhibiting FtsZ polymerization and therefore preventing it from participating in the assembly of the Z ring. This mechanism prevents the premature segregation of damaged DNA to daughter cells during cell division. This chain is Cell division inhibitor SulA, found in Serratia proteamaculans (strain 568).